The following is a 147-amino-acid chain: Small ribosomal subunit protein bS6 (147 aa).

Positions 114 to 147 (GKGTRAAEQAAAAEAAAPAAAPAEPASAEPAPAV) are disordered. A compositionally biased stretch (low complexity) spans 119 to 147 (AAEQAAAAEAAAPAAAPAEPASAEPAPAV).

It belongs to the bacterial ribosomal protein bS6 family.

Binds together with bS18 to 16S ribosomal RNA. The sequence is that of Small ribosomal subunit protein bS6 from Koribacter versatilis (strain Ellin345).